The sequence spans 319 residues: Ribosomal RNA small subunit methyltransferase H (319 aa).

S-adenosyl-L-methionine is bound by residues 34 to 36 (GGH), Asp-54, Phe-83, Asp-104, and Gln-111.

This sequence belongs to the methyltransferase superfamily. RsmH family.

It is found in the cytoplasm. The catalysed reaction is cytidine(1402) in 16S rRNA + S-adenosyl-L-methionine = N(4)-methylcytidine(1402) in 16S rRNA + S-adenosyl-L-homocysteine + H(+). In terms of biological role, specifically methylates the N4 position of cytidine in position 1402 (C1402) of 16S rRNA. The polypeptide is Ribosomal RNA small subunit methyltransferase H (Lactiplantibacillus plantarum (strain ATCC BAA-793 / NCIMB 8826 / WCFS1) (Lactobacillus plantarum)).